The primary structure comprises 396 residues: Acetate kinase (396 aa).

N7 provides a ligand contact to Mg(2+). K14 serves as a coordination point for ATP. Position 88 (R88) interacts with substrate. Residue D145 is the Proton donor/acceptor of the active site. ATP-binding positions include 203–207, 278–280, and 326–330; these read HAGNG, DAR, and GIGEN. Position 379 (E379) interacts with Mg(2+).

The protein belongs to the acetokinase family. As to quaternary structure, homodimer. Requires Mg(2+) as cofactor. It depends on Mn(2+) as a cofactor.

It localises to the cytoplasm. The catalysed reaction is acetate + ATP = acetyl phosphate + ADP. Its pathway is metabolic intermediate biosynthesis; acetyl-CoA biosynthesis; acetyl-CoA from acetate: step 1/2. Its function is as follows. Catalyzes the formation of acetyl phosphate from acetate and ATP. Can also catalyze the reverse reaction. This chain is Acetate kinase, found in Phytoplasma australiense.